The primary structure comprises 232 residues: Large ribosomal subunit protein uL1 (232 aa).

Belongs to the universal ribosomal protein uL1 family. As to quaternary structure, part of the 50S ribosomal subunit.

Functionally, binds directly to 23S rRNA. The L1 stalk is quite mobile in the ribosome, and is involved in E site tRNA release. In terms of biological role, protein L1 is also a translational repressor protein, it controls the translation of the L11 operon by binding to its mRNA. This Mesorhizobium japonicum (strain LMG 29417 / CECT 9101 / MAFF 303099) (Mesorhizobium loti (strain MAFF 303099)) protein is Large ribosomal subunit protein uL1.